The primary structure comprises 30 residues: Putative UPF0377 protein YNR075C-A (30 aa).

It belongs to the UPF0377 family.

This chain is Putative UPF0377 protein YNR075C-A, found in Saccharomyces cerevisiae (strain ATCC 204508 / S288c) (Baker's yeast).